The chain runs to 413 residues: Serine hydroxymethyltransferase (413 aa).

(6S)-5,6,7,8-tetrahydrofolate contacts are provided by residues Leu-117 and 121–123 (GHL). Lys-226 is modified (N6-(pyridoxal phosphate)lysine). Residues Glu-241 and 349–351 (SPF) each bind (6S)-5,6,7,8-tetrahydrofolate.

This sequence belongs to the SHMT family. As to quaternary structure, homodimer. Requires pyridoxal 5'-phosphate as cofactor.

Its subcellular location is the cytoplasm. It carries out the reaction (6R)-5,10-methylene-5,6,7,8-tetrahydrofolate + glycine + H2O = (6S)-5,6,7,8-tetrahydrofolate + L-serine. The protein operates within one-carbon metabolism; tetrahydrofolate interconversion. It participates in amino-acid biosynthesis; glycine biosynthesis; glycine from L-serine: step 1/1. In terms of biological role, catalyzes the reversible interconversion of serine and glycine with tetrahydrofolate (THF) serving as the one-carbon carrier. This reaction serves as the major source of one-carbon groups required for the biosynthesis of purines, thymidylate, methionine, and other important biomolecules. Also exhibits THF-independent aldolase activity toward beta-hydroxyamino acids, producing glycine and aldehydes, via a retro-aldol mechanism. The protein is Serine hydroxymethyltransferase of Halalkalibacterium halodurans (strain ATCC BAA-125 / DSM 18197 / FERM 7344 / JCM 9153 / C-125) (Bacillus halodurans).